Reading from the N-terminus, the 430-residue chain is Sulfide-quinone reductase (430 aa).

Residues 9–13 (GGGVG), 34–36 (SDR), 42–43 (TP), and T105 each bind FAD. C156 (cysteine persulfide intermediate) is an active-site residue. 2 disulfide bridges follow: C280–C422 and C419–C430. The FAD site is built by V294 and G314. An a quinone-binding site is contributed by I346. C347 serves as the catalytic Cysteine persulfide intermediate. K382 contributes to the FAD binding site.

This sequence belongs to the SQRD family. In terms of assembly, homotrimer. Requires FAD as cofactor.

It localises to the membrane. It carries out the reaction n a quinone + n hydrogen sulfide + n H(+) = polysulfur(n-2) + n a quinol. Its function is as follows. Catalyzes the oxidation of hydrogen sulfide, with the help of a quinone. Consecutive reaction cycles lead to the accumulation of a polysulfide product on the active site Cys residues; these products are released when they exceed a critical length, typically as cyclooctasulfur. The polypeptide is Sulfide-quinone reductase (Aquifex aeolicus (strain VF5)).